A 540-amino-acid chain; its full sequence is NAD(P)H-quinone oxidoreductase subunit 2 B, chloroplastic (540 aa).

13 consecutive transmembrane segments (helical) span residues 24–44 (LLLFDGSLIFPECILIFGLIL), 57–77 (IPWLYFIPSTSLVMSITALLF), 99–119 (IFQFLILLCSTLCIPLSVEYI), 124–144 (MAITEFLLFVLTATLGGMFLC), 149–169 (FITIFVAPECFSLCSYLLSGY), 183–203 (YLLMGGASSSILVHGFSWLYG), 227–247 (PGISIALIFITVGIGFKLSPA), 325–345 (WHLLLEILAILSMILGNLIAI), 353–373 (MLAYSSIGQIGYVIIGIIVGD), 384–404 (YMLFYISMNLGTFACIVLFGL), 425–445 (ALSLALCLLSLGGLPPLAGFF), 448–468 (LYLFWCGWQAGLYFLVLIGLL), and 514–534 (MIVCVIASTIPGISMNPIIAI).

Belongs to the complex I subunit 2 family. NDH is composed of at least 16 different subunits, 5 of which are encoded in the nucleus.

It is found in the plastid. The protein resides in the chloroplast thylakoid membrane. The catalysed reaction is a plastoquinone + NADH + (n+1) H(+)(in) = a plastoquinol + NAD(+) + n H(+)(out). It catalyses the reaction a plastoquinone + NADPH + (n+1) H(+)(in) = a plastoquinol + NADP(+) + n H(+)(out). In terms of biological role, NDH shuttles electrons from NAD(P)H:plastoquinone, via FMN and iron-sulfur (Fe-S) centers, to quinones in the photosynthetic chain and possibly in a chloroplast respiratory chain. The immediate electron acceptor for the enzyme in this species is believed to be plastoquinone. Couples the redox reaction to proton translocation, and thus conserves the redox energy in a proton gradient. The polypeptide is NAD(P)H-quinone oxidoreductase subunit 2 B, chloroplastic (Coffea arabica (Arabian coffee)).